The chain runs to 172 residues: Shikimate kinase (172 aa).

8–15 (GARASGKT) serves as a coordination point for ATP.

This sequence belongs to the shikimate kinase family.

The protein resides in the cytoplasm. It catalyses the reaction shikimate + ATP = 3-phosphoshikimate + ADP + H(+). It participates in metabolic intermediate biosynthesis; chorismate biosynthesis; chorismate from D-erythrose 4-phosphate and phosphoenolpyruvate: step 5/7. The sequence is that of Shikimate kinase from Oleidesulfovibrio alaskensis (strain ATCC BAA-1058 / DSM 17464 / G20) (Desulfovibrio alaskensis).